Consider the following 228-residue polypeptide: Lipoprotein-releasing system ATP-binding protein LolD (228 aa).

The ABC transporter domain occupies 6–228 (LRCKELSKSY…KNGILHKEQG (223 aa)). 42–49 (GASGSGKS) serves as a coordination point for ATP.

Belongs to the ABC transporter superfamily. Lipoprotein translocase (TC 3.A.1.125) family. In terms of assembly, the complex is composed of two ATP-binding proteins (LolD) and two transmembrane proteins (LolC and LolE).

It is found in the cell inner membrane. In terms of biological role, part of the ABC transporter complex LolCDE involved in the translocation of mature outer membrane-directed lipoproteins, from the inner membrane to the periplasmic chaperone, LolA. Responsible for the formation of the LolA-lipoprotein complex in an ATP-dependent manner. The polypeptide is Lipoprotein-releasing system ATP-binding protein LolD (Idiomarina loihiensis (strain ATCC BAA-735 / DSM 15497 / L2-TR)).